A 156-amino-acid polypeptide reads, in one-letter code: Ribosome maturation factor RimP (156 aa).

Belongs to the RimP family.

It localises to the cytoplasm. Required for maturation of 30S ribosomal subunits. The polypeptide is Ribosome maturation factor RimP (Lachnospira eligens (strain ATCC 27750 / DSM 3376 / VPI C15-48 / C15-B4) (Eubacterium eligens)).